Here is a 124-residue protein sequence, read N- to C-terminus: Large ribosomal subunit protein eL33 (124 aa).

At alanine 2 the chain carries N-acetylalanine.

Belongs to the eukaryotic ribosomal protein eL33 family.

The protein is Large ribosomal subunit protein eL33 of Caenorhabditis elegans.